The chain runs to 224 residues: MRNNIRIAIDGPAAAGKSTVAKIIAKRLSYLYIDTGAMYRALTYVALQQKVALDDEQALISLLKNTYIELKSSEQGQLVFVNGEDVTNIIRSEEVTNAVSLVAKHPSVREEMVARQRALAKNGGVVMDGRDIGTYVLPNAEVKIFLKASVEERAKRRHAENIARGFPSDLETLKKEIARRDQIDSEREVAPLKKAEDAIEIDTTSLSIEEVVDRIMEIVNERIG.

11 to 19 (GPAAAGKST) provides a ligand contact to ATP.

It belongs to the cytidylate kinase family. Type 1 subfamily.

The protein resides in the cytoplasm. The catalysed reaction is CMP + ATP = CDP + ADP. It catalyses the reaction dCMP + ATP = dCDP + ADP. The polypeptide is Cytidylate kinase (Geobacillus sp. (strain WCH70)).